Consider the following 153-residue polypeptide: NAD(P)H-quinone oxidoreductase subunit N (153 aa).

It belongs to the complex I NdhN subunit family. In terms of assembly, NDH-1 can be composed of about 15 different subunits; different subcomplexes with different compositions have been identified which probably have different functions.

The protein resides in the cellular thylakoid membrane. The enzyme catalyses a plastoquinone + NADH + (n+1) H(+)(in) = a plastoquinol + NAD(+) + n H(+)(out). It catalyses the reaction a plastoquinone + NADPH + (n+1) H(+)(in) = a plastoquinol + NADP(+) + n H(+)(out). Its function is as follows. NDH-1 shuttles electrons from an unknown electron donor, via FMN and iron-sulfur (Fe-S) centers, to quinones in the respiratory and/or the photosynthetic chain. The immediate electron acceptor for the enzyme in this species is believed to be plastoquinone. Couples the redox reaction to proton translocation, and thus conserves the redox energy in a proton gradient. Cyanobacterial NDH-1 also plays a role in inorganic carbon-concentration. The polypeptide is NAD(P)H-quinone oxidoreductase subunit N (Prochlorococcus marinus (strain MIT 9313)).